A 194-amino-acid polypeptide reads, in one-letter code: PPE family protein PPE41 (194 aa).

This sequence belongs to the mycobacterial PPE family. In terms of assembly, forms a heterodimer with PE25. The dimer forms a 1:1:1 heterotrimeric complex with EspG5. PPE41 interacts directly with EspG5.

Its subcellular location is the secreted. It localises to the cell surface. Functionally, the PE25/PPE41 dimer induces both a strong humoral and cellular immune response. The dimer induces necrosis, but not apoptosis, in mouse macrophage cells. It also induces activation and maturation of mouse dendritic cells and drives Th2-biased immune responses. This is PPE family protein PPE41 from Mycobacterium tuberculosis (strain ATCC 25618 / H37Rv).